Reading from the N-terminus, the 183-residue chain is MARLKEFYKKDVVTMMMKRFNYSSVMEVPRILKITLNMGVGEAVGDKKVMNHAIEDMTLISGQKPVVTKARKSIAGFKIREGWPIGCKVTLRRERMYEFLDRLISITLPRVRDFRGLNPKSFDGTGNYSMGIHEQIVFPEIDYDKTDGIRGLDICITTSAKTNEEAKALLEAFNLPLKDKDRK.

This sequence belongs to the universal ribosomal protein uL5 family. As to quaternary structure, part of the 50S ribosomal subunit; part of the 5S rRNA/L5/L18/L25 subcomplex. Contacts the 5S rRNA and the P site tRNA. Forms a bridge to the 30S subunit in the 70S ribosome.

In terms of biological role, this is one of the proteins that bind and probably mediate the attachment of the 5S RNA into the large ribosomal subunit, where it forms part of the central protuberance. In the 70S ribosome it contacts protein S13 of the 30S subunit (bridge B1b), connecting the 2 subunits; this bridge is implicated in subunit movement. Contacts the P site tRNA; the 5S rRNA and some of its associated proteins might help stabilize positioning of ribosome-bound tRNAs. This Legionella pneumophila (strain Lens) protein is Large ribosomal subunit protein uL5.